A 374-amino-acid polypeptide reads, in one-letter code: Fibrous sheath-interacting protein 1 (374 aa).

Disordered regions lie at residues 1–80 (MEVY…LEVL), 95–120 (EMTDQTTETSSDHEDSEEENEDPEMR), and 225–244 (EVGQEVTEDRRHTGASHSKS). 3 stretches are compositionally biased toward basic and acidic residues: residues 12–28 (PHSRGLEMDAEGSRDKS), 45–55 (DIIKGRLDEIS), and 65–77 (ENRRKSAEGHRSL). Residues 262-290 (SVFLTQQEKERIEDLLKDLEEELLEEPQL) are a coiled coil.

Belongs to the FSIP1 family.

This chain is Fibrous sheath-interacting protein 1 (fsip1), found in Danio rerio (Zebrafish).